The following is a 323-amino-acid chain: Protein translocase subunit SecF (323 aa).

At 1-22 the chain is on the cytoplasmic side; the sequence is MAQEYTVEQLNHGRKVYDFMRW. The chain crosses the membrane as a helical span at residues 23-43; it reads DYWAFGISGLLLIAAIVIMGV. Over 44–142 the chain is Periplasmic; sequence RGFNWGLDFT…FVGPSVGADL (99 aa). A helical membrane pass occupies residues 143 to 163; that stretch reads AQTGAMALMAALLSILVYVGF. Residues 164–170 lie on the Cytoplasmic side of the membrane; sequence RFEWRLA. The chain crosses the membrane as a helical span at residues 171-191; the sequence is AGVVIALAHDVIITLGILSLF. Topologically, residues 192–196 are periplasmic; sequence HIEID. Residues 197–217 form a helical membrane-spanning segment; it reads LTIVASLMSVIGYSLNDSIVV. At 218–247 the chain is on the cytoplasmic side; that stretch reads SDRIRENFRKIRRGTPYEIFNVSLTQTLHR. The chain crosses the membrane as a helical span at residues 248–270; that stretch reads TLITSGTTLMVILMLYLFGGPVL. The Periplasmic portion of the chain corresponds to 271–280; that stretch reads EGFSLTMLIG. Residues 281–301 traverse the membrane as a helical segment; that stretch reads VSIGTASSIYVASALALKLGM. The Cytoplasmic portion of the chain corresponds to 302–323; the sequence is KREHMLQQKVEKEGADQPSILP.

This sequence belongs to the SecD/SecF family. SecF subfamily. In terms of assembly, forms a complex with SecD. Part of the essential Sec protein translocation apparatus which comprises SecA, SecYEG and auxiliary proteins SecDF-YajC and YidC.

The protein resides in the cell inner membrane. Functionally, part of the Sec protein translocase complex. Interacts with the SecYEG preprotein conducting channel. SecDF uses the proton motive force (PMF) to complete protein translocation after the ATP-dependent function of SecA. This is Protein translocase subunit SecF from Escherichia coli O157:H7.